The chain runs to 404 residues: Histidinol dehydrogenase (404 aa).

Tyr-114, Gln-176, and Asn-199 together coordinate NAD(+). Ser-222, Gln-244, and His-247 together coordinate substrate. Gln-244 and His-247 together coordinate Zn(2+). Residues Glu-300 and His-301 each act as proton acceptor in the active site. Residues His-301, Asp-334, Glu-388, and His-393 each contribute to the substrate site. Asp-334 serves as a coordination point for Zn(2+). A Zn(2+)-binding site is contributed by His-393.

The protein belongs to the histidinol dehydrogenase family. Zn(2+) serves as cofactor.

It catalyses the reaction L-histidinol + 2 NAD(+) + H2O = L-histidine + 2 NADH + 3 H(+). The protein operates within amino-acid biosynthesis; L-histidine biosynthesis; L-histidine from 5-phospho-alpha-D-ribose 1-diphosphate: step 9/9. Catalyzes the sequential NAD-dependent oxidations of L-histidinol to L-histidinaldehyde and then to L-histidine. This is Histidinol dehydrogenase (hisD) from Archaeoglobus fulgidus (strain ATCC 49558 / DSM 4304 / JCM 9628 / NBRC 100126 / VC-16).